We begin with the raw amino-acid sequence, 613 residues long: Azole resistance protein 1 (613 aa).

Residues 1–38 form a disordered region; the sequence is MKGEPKTYSMSDLSYYGEKAQQQNEKQQKQYVVRRNST. Topologically, residues 1-70 are extracellular; that stretch reads MKGEPKTYSM…PKGFILYASL (70 aa). Residues 71–91 traverse the membrane as a helical segment; it reads IALALSLFLAALDIMIVSTII. Residues 92–102 are Cytoplasmic-facing; that stretch reads EEVAKQFGSYS. A helical transmembrane segment spans residues 103-123; the sequence is EIGWLFTGYSLPNALLALIWG. Residues 124–134 are Extracellular-facing; sequence RIATPIGFKET. The helical transmembrane segment at 135 to 155 threads the bilayer; that stretch reads MLFAIVIFEIGSLISALANSM. Residues 156–163 are Cytoplasmic-facing; it reads SMLIGGRV. The chain crosses the membrane as a helical span at residues 164–184; sequence IAGVGGCGIQSLSFVIGSTLV. Residues 185-189 are Extracellular-facing; sequence EESQR. A helical transmembrane segment spans residues 190-210; sequence GILIAVLSCSFAIASVVGPFL. The Cytoplasmic segment spans residues 211–221; sequence GGVFTSSVTWR. The chain crosses the membrane as a helical span at residues 222–242; that stretch reads WCFYVNLPIGGLAFFLFLFFY. Residues 243–298 lie on the Extracellular side of the membrane; sequence NPGLSTFQETMDNIRKFPSQFIEIVRNVAYHLLKIKGFSKLNGWRKPFMELIFMYD. The chain crosses the membrane as a helical span at residues 299 to 319; sequence IIEFVFCSAGFTCILLAFTFG. Residues 320–329 are Cytoplasmic-facing; the sequence is GNRYAWNSAS. Residues 330–350 form a helical membrane-spanning segment; the sequence is IIILFIIGIVLVVLAGIYDFL. Topologically, residues 351–375 are extracellular; sequence VFPKFNIVKATPHYQPLMSWTNIKK. The chain crosses the membrane as a helical span at residues 376–396; it reads PGIFTVNIALFLTCAGYISQF. The Cytoplasmic portion of the chain corresponds to 397 to 414; that stretch reads TYIVQYFQLIYNDSAWRA. The chain crosses the membrane as a helical span at residues 415 to 435; the sequence is AVHLVACIISTVVTAILCGAI. At 436–443 the chain is on the extracellular side; the sequence is TDKTRQIK. The chain crosses the membrane as a helical span at residues 444 to 464; it reads PIIVISSIFGVVGAGILTLLN. The Cytoplasmic portion of the chain corresponds to 465-472; that stretch reads NNANNSAH. Residues 473-493 form a helical membrane-spanning segment; that stretch reads IGLLILPGVAFGGLAQSSMLA. The Extracellular portion of the chain corresponds to 494-581; it reads SQIQLDKKSP…SKLGNIISES (88 aa). The chain crosses the membrane as a helical span at residues 582 to 602; that stretch reads LTDVFYMALGFYALSLIFAVF. The Cytoplasmic segment spans residues 603-613; sequence ASNKKVTASLR.

Belongs to the major facilitator superfamily.

The protein localises to the cell membrane. Its function is as follows. Transporter protein required for adaptation to high stress imposed by low-chain organic acids, in particular by acetic acid, and for resistance to azoles, especially to ketoconazole and fluconazole. This is Azole resistance protein 1 (AZR1) from Saccharomyces cerevisiae (strain ATCC 204508 / S288c) (Baker's yeast).